Consider the following 79-residue polypeptide: Small cysteine-rich protein 2 (79 aa).

The N-terminal stretch at M1 to G21 is a signal peptide. Residues K22–D35 constitute a propeptide that is removed on maturation.

It belongs to the Cnidaria small cysteine-rich protein (SCRiP) family. delta subfamily. Post-translationally, contains 4 disulfide bonds.

It is found in the secreted. Its subcellular location is the nematocyst. Its function is as follows. This recombinant protein induces severe neurotoxicity on zebrafish larvae (Danio rerio) at a concentration of 230 mg/ml, but does not show toxicity when injected in blowfly larvae (Sarcophaga falculata). All fish incubated with this protein died within 200 minutes of exposure. Has also been claimed to be implied in calcification, but this function seems improbable. In Acropora millepora (Staghorn coral), this protein is Small cysteine-rich protein 2.